The chain runs to 439 residues: Tol-Pal system protein TolB (439 aa).

The N-terminal stretch at 1–22 (MKKPLRWLAALTVLLLPLSALA) is a signal peptide.

This sequence belongs to the TolB family. As to quaternary structure, the Tol-Pal system is composed of five core proteins: the inner membrane proteins TolA, TolQ and TolR, the periplasmic protein TolB and the outer membrane protein Pal. They form a network linking the inner and outer membranes and the peptidoglycan layer.

Its subcellular location is the periplasm. Part of the Tol-Pal system, which plays a role in outer membrane invagination during cell division and is important for maintaining outer membrane integrity. This is Tol-Pal system protein TolB from Xanthomonas oryzae pv. oryzae (strain MAFF 311018).